Reading from the N-terminus, the 456-residue chain is Phosphomethylpyrimidine synthase (456 aa).

Substrate contacts are provided by residues N80, M109, Y139, H175, 195 to 197 (SRG), 236 to 239 (DSLR), and E275. H279 provides a ligand contact to Zn(2+). Y302 is a binding site for substrate. H343 is a binding site for Zn(2+). 3 residues coordinate [4Fe-4S] cluster: C423, C426, and C431.

It belongs to the ThiC family. [4Fe-4S] cluster is required as a cofactor.

The enzyme catalyses 5-amino-1-(5-phospho-beta-D-ribosyl)imidazole + S-adenosyl-L-methionine = 4-amino-2-methyl-5-(phosphooxymethyl)pyrimidine + CO + 5'-deoxyadenosine + formate + L-methionine + 3 H(+). The protein operates within cofactor biosynthesis; thiamine diphosphate biosynthesis. In terms of biological role, catalyzes the synthesis of the hydroxymethylpyrimidine phosphate (HMP-P) moiety of thiamine from aminoimidazole ribotide (AIR) in a radical S-adenosyl-L-methionine (SAM)-dependent reaction. The sequence is that of Phosphomethylpyrimidine synthase from Prochlorococcus marinus (strain AS9601).